Here is a 143-residue protein sequence, read N- to C-terminus: MIFMKELFLFLHVVLATFWVGGMLFLSLVVAPYLKDKPQIRNEAFQEVGKRFSLYGTFLSLFLLFVTGLVNTYLIQGGFRPSIHTKLGVFFVVVFISLLHDLWAGKKALYSEKHRVWAKWLGILNLILSLLLVYLGVRIRLGY.

4 consecutive transmembrane segments (helical) span residues 7-29, 52-74, 87-105, and 120-142; these read LFLFLHVVLATFWVGGMLFLSLV, FSLYGTFLSLFLLFVTGLVNTYL, LGVFFVVVFISLLHDLWAG, and WLGILNLILSLLLVYLGVRIRLG.

The protein resides in the cell membrane. This is an uncharacterized protein from Aquifex aeolicus (strain VF5).